A 403-amino-acid polypeptide reads, in one-letter code: MCSIGEDDFGDTGGLHAMTAGGPVQIATGGTGECQKCGQHSDDLFKVNFRSEECRDCFLNYARHKFRAALGAAKALPRDSDVLLLLDGSIESIVLLDMLHYAQTQNTFKRLHCQAKVLYLDESVVQEQQSLDIDRLQKLQDRYTPFDLFVIELGTDLSNLRPLKNYTPKTSREESDLKIKLDKLRTLSARQDYLQQQRKRFLASVAHQLNCTHVFVPSISKDLATQFLTSIALGRGGSAALDVALCDDRLDHDIKLLRPLKDLNEQEVQLYVRARNLEDLKLGPSLATYGQEKGETASLQNLTAAFVRNLQENYAATVSTVFRTGNKIAPNRHVDQDMCQQCQSPLDSLLSDTLLAIEYSRVVSLEGSKLSNHNNDLEQLSMQRLNKDDRLCHACRNVQDEYL.

It belongs to the CTU2/NCS2 family.

It localises to the cytoplasm. It functions in the pathway tRNA modification; 5-methoxycarbonylmethyl-2-thiouridine-tRNA biosynthesis. Plays a central role in 2-thiolation of mcm(5)S(2)U at tRNA wobble positions of tRNA(Lys), tRNA(Glu) and tRNA(Gln). May act by forming a heterodimer with NCS6/CTU1 that ligates sulfur from thiocarboxylated URM1 onto the uridine of tRNAs at wobble position. This Drosophila willistoni (Fruit fly) protein is Cytoplasmic tRNA 2-thiolation protein 2.